The following is a 321-amino-acid chain: Phosphoenolpyruvate transferase (321 aa).

7,8-didemethyl-8-hydroxy-5-deazariboflavin is bound at residue D51.

The protein belongs to the CofD family. Homodimer. Mg(2+) is required as a cofactor.

The enzyme catalyses enolpyruvoyl-2-diphospho-5'-guanosine + 7,8-didemethyl-8-hydroxy-5-deazariboflavin = dehydro coenzyme F420-0 + GMP + H(+). It functions in the pathway cofactor biosynthesis; coenzyme F420 biosynthesis. Functionally, catalyzes the transfer of the phosphoenolpyruvate moiety from enoylpyruvoyl-2-diphospho-5'-guanosine (EPPG) to 7,8-didemethyl-8-hydroxy-5-deazariboflavin (FO) with the formation of dehydro coenzyme F420-0 and GMP. This Kitasatospora aureofaciens (Streptomyces aureofaciens) protein is Phosphoenolpyruvate transferase.